Consider the following 605-residue polypeptide: 9-cis-epoxycarotenoid dioxygenase NCED1, chloroplastic (605 aa).

The N-terminal 16 residues, 1–16, are a transit peptide targeting the chloroplast; sequence MATTTSHATNTWIKTK. A disordered region spans residues 55–89; the sequence is ILHFPKQSSNYQTPKNNTISHPKQENNNSSSSSTS. Residues 60 to 75 show a composition bias toward polar residues; it reads KQSSNYQTPKNNTISH. Residues 80 to 89 show a composition bias toward low complexity; that stretch reads NNNSSSSSTS. H302, H351, H416, and H592 together coordinate Fe cation.

The protein belongs to the carotenoid oxygenase family. It depends on Fe(2+) as a cofactor. As to expression, expressed in developing and ripening fruits. Highly expressed in pulp. Observed in unpollinated ovaries (e.g. ovules, placenta and pericarp). Expressed in flowers.

It localises to the plastid. The protein resides in the chloroplast stroma. The enzyme catalyses a 9-cis-epoxycarotenoid + O2 = a 12'-apo-carotenal + 2-cis,4-trans-xanthoxin. It catalyses the reaction 9-cis-violaxanthin + O2 = (3S,5R,6S)-5,6-epoxy-3-hydroxy-5,6-dihydro-12'-apo-beta-caroten-12'-al + 2-cis,4-trans-xanthoxin. It carries out the reaction 9'-cis-neoxanthin + O2 = (3S,5R,6R)-3,5-dihydroxy-6,7-didehydro-5,6-dihydro-12'-apo-beta-caroten-12'-al + 2-cis,4-trans-xanthoxin. It participates in plant hormone biosynthesis; abscisate biosynthesis. Has a 11,12(11',12') 9-cis epoxycarotenoid cleavage activity. Catalyzes the first step of abscisic-acid (ABA) biosynthesis from carotenoids. Required for ABA accumulation upon drought. Required for ABA-mediated regulation of anther/pollen development, including metabolism, cell wall modification and transcription level. Positive regulator of fruit ripening involved in the biosynthesis of abscisic acid (ABA); initiates ABA biosynthesis at the onset of fruit ripening. Modulates the degree of pigmentation and carotenoid composition as well as pectin catabolism during ripening and may regulate the ethylene production and action in climacteric tomato fruit. This Solanum lycopersicum (Tomato) protein is 9-cis-epoxycarotenoid dioxygenase NCED1, chloroplastic.